Here is a 197-residue protein sequence, read N- to C-terminus: Imidazoleglycerol-phosphate dehydratase (197 aa).

It belongs to the imidazoleglycerol-phosphate dehydratase family.

It is found in the cytoplasm. It carries out the reaction D-erythro-1-(imidazol-4-yl)glycerol 3-phosphate = 3-(imidazol-4-yl)-2-oxopropyl phosphate + H2O. It functions in the pathway amino-acid biosynthesis; L-histidine biosynthesis; L-histidine from 5-phospho-alpha-D-ribose 1-diphosphate: step 6/9. This chain is Imidazoleglycerol-phosphate dehydratase, found in Rhodopseudomonas palustris (strain TIE-1).